We begin with the raw amino-acid sequence, 454 residues long: Protein phosphatase 1F (454 aa).

The span at 1–12 (MSSGAPQKSSPM) shows a compositional bias: polar residues. Residues 1–28 (MSSGAPQKSSPMASGAEETPGFLDTLLQ) are disordered. Positions 156–413 (LVSIHAIRNT…DNITVMVVFL (258 aa)) constitute a PPM-type phosphatase domain. Residues Asp-198, Gly-199, Asp-360, and Asp-404 each contribute to the Mn(2+) site. The tract at residues 419-454 (LLEGGNQGEGDPQAEGRRQDLPSSLPEPETQAPPRS) is disordered. The residue at position 454 (Ser-454) is a Phosphoserine.

The protein belongs to the PP2C family. Associates with FEM1B. Mg(2+) is required as a cofactor. The cofactor is Mn(2+).

The enzyme catalyses O-phospho-L-seryl-[protein] + H2O = L-seryl-[protein] + phosphate. It carries out the reaction O-phospho-L-threonyl-[protein] + H2O = L-threonyl-[protein] + phosphate. Functionally, dephosphorylates and concomitantly deactivates CaM-kinase II activated upon autophosphorylation, and CaM-kinases IV and I activated upon phosphorylation by CaM-kinase kinase. Promotes apoptosis. This is Protein phosphatase 1F (PPM1F) from Homo sapiens (Human).